A 182-amino-acid chain; its full sequence is MKLSEVQDNMQKTIESTQRSFNTIRTGRANSALLDRVMVDYYGTETPLKSLANITTPDATTIAIQPYDRGSMGQIEKAIQLSDIGLTPNNDGQMIRLNIPPLTTERRKELVKLAGKLAEEGKVAIRNIRRDAIDSVRKQEKNHELSEDESRNLQDEIQKVTDEYTAKIDELLAAKEKDISTV.

This sequence belongs to the RRF family.

It localises to the cytoplasm. Functionally, responsible for the release of ribosomes from messenger RNA at the termination of protein biosynthesis. May increase the efficiency of translation by recycling ribosomes from one round of translation to another. The protein is Ribosome-recycling factor of Gloeothece citriformis (strain PCC 7424) (Cyanothece sp. (strain PCC 7424)).